The following is a 459-amino-acid chain: Carbonic anhydrase 9 (459 aa).

The signal sequence occupies residues 1-37 (MAPLCPSPWLPLLIPAPAPGLTVQLLLSLLLLVPVHP). The interval 38 to 112 (QRLPRMQEDS…EEEGSLKLED (75 aa)) is proteoglycan-like (PG). Residues 38–414 (QRLPRMQEDS…QLNSCLAAGD (377 aa)) are Extracellular-facing. Positions 42-154 (RMQEDSPLGG…GDPPWPRVSP (113 aa)) are disordered. Residues 55 to 95 (GEDDPLGEEDLPSEEDSPREEDPPGEEDLPGEEDLPGEEDL) are compositionally biased toward acidic residues. The span at 96-112 (PEVKPKSEEEGSLKLED) shows a compositional bias: basic and acidic residues. Thr115 carries O-linked (GlcNAc...) threonine glycosylation. Positions 129-140 (AHRDKEGDDQSH) are enriched in basic and acidic residues. Residues 138 to 391 (QSHWRYGGDP…NGRVIEASFP (254 aa)) are catalytic. Residues 139–390 (SHWRYGGDPP…LNGRVIEASF (252 aa)) enclose the Alpha-carbonic anhydrase domain. A disulfide bridge connects residues Cys156 and Cys336. Residue His200 is the Proton donor/acceptor of the active site. Zn(2+) is bound by residues His226, His228, and His251. 332-333 (TT) is a binding site for substrate. A glycan (N-linked (GlcNAc...) asparagine) is linked at Asn346. Residues 415 to 435 (ILALVFGLLFAVTSVAFLVQM) traverse the membrane as a helical segment. Over 436 to 459 (RRQHRRGTKGGVSYRPAEVAETGA) the chain is Cytoplasmic. Residue Tyr449 is modified to Phosphotyrosine.

It belongs to the alpha-carbonic anhydrase family. In terms of assembly, forms oligomers linked by disulfide bonds. Zn(2+) serves as cofactor. Post-translationally, asn-346 bears high-mannose type glycan structures. As to expression, expressed primarily in carcinoma cells lines. Expression is restricted to very few normal tissues and the most abundant expression is found in the epithelial cells of gastric mucosa.

The protein resides in the nucleus. Its subcellular location is the nucleolus. It localises to the cell membrane. It is found in the cell projection. The protein localises to the microvillus membrane. The catalysed reaction is hydrogencarbonate + H(+) = CO2 + H2O. With respect to regulation, inhibited by coumarins, saccharin, sulfonamide derivatives such as acetazolamide (AZA) and Foscarnet (phosphonoformate trisodium salt). Its function is as follows. Catalyzes the interconversion between carbon dioxide and water and the dissociated ions of carbonic acid (i.e. bicarbonate and hydrogen ions). The polypeptide is Carbonic anhydrase 9 (CA9) (Homo sapiens (Human)).